The sequence spans 629 residues: Dual specificity tyrosine-phosphorylation-regulated kinase 1B (629 aa).

The residue at position 63 (Tyr-63) is a Phosphotyrosine. Residues 67–86 (KKRRAQQAPPQDSSTKKEKK) form a disordered region. The short motif at 69–86 (RRAQQAPPQDSSTKKEKK) is the Bipartite nuclear localization signal element. Phosphotyrosine occurs at positions 92 and 111. Positions 111–431 (YEIDSLIGKG…PLGALQHGFF (321 aa)) constitute a Protein kinase domain. 117–125 (IGKGSFGQV) is an ATP binding site. The residue at position 129 (Tyr-129) is a Phosphotyrosine. Lys-140 provides a ligand contact to ATP. Phosphotyrosine is present on Tyr-171. 190–193 (FELL) provides a ligand contact to ATP. The active-site Proton acceptor is the Asp-239. Position 262 is a phosphoserine (Ser-262). At Tyr-271 the chain carries Phosphotyrosine; by autocatalysis. Tyr-273 bears the Phosphotyrosine mark. The tract at residues 380–399 (GVQTGGPGGRRAGEPGHSPA) is disordered. Tyr-401 bears the Phosphotyrosine mark. 2 disordered regions span residues 436-480 (DEAT…SNDN) and 496-629 (PITD…AASS). A compositionally biased stretch (low complexity) spans 438–477 (ATNTGPAGSSASTSPAPLDTCPSSSTASSISSSGGSSGSS). Residues 480–520 (NRAYRYSNRYCGGPGPPITDCEMNSPQVLPSQPLRPWAGGD) form an interaction with RANBP9 region. Composition is skewed to pro residues over residues 552–562 (PPSPTSPPPPE) and 574–585 (DCSPPPPAPAPQ). A Phosphoserine modification is found at Ser-624.

This sequence belongs to the protein kinase superfamily. CMGC Ser/Thr protein kinase family. MNB/DYRK subfamily. In terms of assembly, dimer. Interacts with DCOHM, MAP2K3/MKK3, RANBP9 and TCF1/HNF1A. Part of a complex consisting of RANBP9, RAN, DYRK1B and COPS5. Interacts with DCAF7. Interacts with RNF169. Phosphorylated by MAP kinase. Tyrosine phosphorylation may be required for dimerization. In terms of tissue distribution, isoform 1 and isoform 2 are broadly expressed. Isoform 3 seems specific for skeletal muscle (at protein level).

The protein localises to the nucleus. Its subcellular location is the nucleolus. It is found in the chromosome. The catalysed reaction is L-seryl-[protein] + ATP = O-phospho-L-seryl-[protein] + ADP + H(+). It catalyses the reaction L-threonyl-[protein] + ATP = O-phospho-L-threonyl-[protein] + ADP + H(+). It carries out the reaction L-tyrosyl-[protein] + ATP = O-phospho-L-tyrosyl-[protein] + ADP + H(+). Its activity is regulated as follows. Inhibited by RANBP9. Its function is as follows. Dual-specificity kinase which possesses both serine/threonine and tyrosine kinase activities. Plays an essential role in ribosomal DNA (rDNA) double-strand break repair and rDNA copy number maintenance. During DNA damage, mediates transcription silencing in part via phosphorylating and enforcing DSB accumulation of the histone methyltransferase EHMT2. Enhances the transcriptional activity of TCF1/HNF1A and FOXO1. Inhibits epithelial cell migration. Mediates colon carcinoma cell survival in mitogen-poor environments. Inhibits the SHH and WNT1 pathways, thereby enhancing adipogenesis. In addition, promotes expression of the gluconeogenic enzyme glucose-6-phosphatase catalytic subunit 1 (G6PC1). The polypeptide is Dual specificity tyrosine-phosphorylation-regulated kinase 1B (Dyrk1b) (Mus musculus (Mouse)).